Here is a 269-residue protein sequence, read N- to C-terminus: Chymotrypsin-like elastase family member 2A (269 aa).

An N-terminal signal peptide occupies residues 1–16; that stretch reads MIRALLLSTLVAGALS. A propeptide spans 17 to 28 (activation peptide); sequence CGLPANLPQLPR. In terms of domain architecture, Peptidase S1 spans 29–267; sequence VVGGEDARPN…YIDWINSVIA (239 aa). Residues cysteine 58 and cysteine 74 are joined by a disulfide bond. Active-site charge relay system residues include histidine 73 and aspartate 121. 3 cysteine pairs are disulfide-bonded: cysteine 155-cysteine 222, cysteine 186-cysteine 202, and cysteine 212-cysteine 243. The active-site Charge relay system is the serine 216.

The protein belongs to the peptidase S1 family. Elastase subfamily. Interacts with CPA1. Interacts with SERPINA1. In terms of tissue distribution, pancreas.

It is found in the secreted. The catalysed reaction is Preferential cleavage: Leu-|-Xaa, Met-|-Xaa and Phe-|-Xaa. Hydrolyzes elastin.. Functionally, elastase that enhances insulin signaling and might have a physiologic role in cellular glucose metabolism. Circulates in plasma and reduces platelet hyperactivation, triggers both insulin secretion and degradation, and increases insulin sensitivity. This chain is Chymotrypsin-like elastase family member 2A (CELA2A), found in Sus scrofa (Pig).